Consider the following 690-residue polypeptide: Highly divergent homeobox (690 aa).

Positions 3 to 63 (LRSVFTVEQQ…NKRRKMSSKN (61 aa)) form a DNA-binding region, homeobox 1. 2 disordered regions span residues 55–76 (KRRKMSSKNSESGTATTGTSLS) and 112–132 (SPASSSSRQGTNKHTDTQITE). The segment covering 64–76 (SESGTATTGTSLS) has biased composition (low complexity). Polar residues predominate over residues 113 to 123 (PASSSSRQGTN). Glycyl lysine isopeptide (Lys-Gly) (interchain with G-Cter in SUMO2) cross-links involve residues K135, K140, K144, K163, K172, K194, K212, K221, and K232. Residues 435-498 (ALQDRTQFSD…NRRRKYRLMG (64 aa)) constitute a DNA-binding region (homeobox 2). A disordered region spans residues 501–539 (VPPPRGGPADFSEQPESGSLSALTPGEEAGPEVGEDNDR). K613 is covalently cross-linked (Glycyl lysine isopeptide (Lys-Gly) (interchain with G-Cter in SUMO2)). Residues 664-690 (FNHASLEPDDTSFSVSSLSEKNVSESL) form a disordered region. Positions 674–690 (TSFSVSSLSEKNVSESL) are enriched in polar residues.

It is found in the nucleus. This is Highly divergent homeobox (HDX) from Homo sapiens (Human).